The sequence spans 92 residues: U21-hexatoxin-Hi1a (92 aa).

An N-terminal signal peptide occupies residues 1–19 (MKTILSMLIFVALFAAIVG). 4 disulfides stabilise this stretch: Cys-41–Cys-55, Cys-48–Cys-67, Cys-54–Cys-82, and Cys-85–Cys-92.

Belongs to the neurotoxin 21 family. Expressed by the venom gland.

It localises to the secreted. Functionally, potent insecticidal toxin with probable ion channel impairing activity. In vivo, reversibly paralyzes all flies within 30 minutes, even at low dose (0.3 nmol/g). This Hadronyche infensa (Fraser island funnel-web spider) protein is U21-hexatoxin-Hi1a.